Here is a 383-residue protein sequence, read N- to C-terminus: MAKRDYYDVLGVSKGASPDEIKKGFRKKAKELHPDRNSDNPNAEAQFKEANEAYDILKDPDKKAAYDRYGHAAFENGSGGPRGPGGFGGQGQGDFASAFSDVFEDLFGDFMGGQRGGGRQRAARGSDLRYNLRITLEQAFMGMQKTISVPGTVSCSACEGTGAEGGAEPVVCPTCSGMGKVRAQQGFFTIEKTCPTCSGMGQIIKNPCQACRGAGREEKTRALSVNIPAGVETGTRIRLAGEGDAGVRGGPSGDLYIFIEVEEHRIFQREGLDLYCRVPVSMTSAALGGDVEVPTIEGGRSRVKIPSGSQSGRQMRLRGKGMPALRGAGTGDMFIELAVETPVNLTMRQRELLREFEAESQDNQPETSKFFKTVKSFWDGMKS.

The region spanning 5 to 70 (DYYDVLGVSK…DKKAAYDRYG (66 aa)) is the J domain. The CR-type zinc-finger motif lies at 142–220 (GMQKTISVPG…CRGAGREEKT (79 aa)). Residues C155, C158, C172, C175, C194, C197, C208, and C211 each coordinate Zn(2+). 4 CXXCXGXG motif repeats span residues 155–162 (CSACEGTG), 172–179 (CPTCSGMG), 194–201 (CPTCSGMG), and 208–215 (CQACRGAG).

It belongs to the DnaJ family. In terms of assembly, homodimer. Requires Zn(2+) as cofactor.

Its subcellular location is the cytoplasm. Participates actively in the response to hyperosmotic and heat shock by preventing the aggregation of stress-denatured proteins and by disaggregating proteins, also in an autonomous, DnaK-independent fashion. Unfolded proteins bind initially to DnaJ; upon interaction with the DnaJ-bound protein, DnaK hydrolyzes its bound ATP, resulting in the formation of a stable complex. GrpE releases ADP from DnaK; ATP binding to DnaK triggers the release of the substrate protein, thus completing the reaction cycle. Several rounds of ATP-dependent interactions between DnaJ, DnaK and GrpE are required for fully efficient folding. Also involved, together with DnaK and GrpE, in the DNA replication of plasmids through activation of initiation proteins. This chain is Chaperone protein DnaJ, found in Dinoroseobacter shibae (strain DSM 16493 / NCIMB 14021 / DFL 12).